The chain runs to 616 residues: Probable beta-hexosaminidase ARB_01353 (616 aa).

The first 20 residues, methionine 1–alanine 20, serve as a signal peptide directing secretion. The disordered stretch occupies residues lysine 96–glycine 117. Asparagine 333 is a glycosylation site (N-linked (GlcNAc...) asparagine). The active-site Proton donor is the glutamate 361.

This sequence belongs to the glycosyl hydrolase 20 family.

The protein resides in the secreted. The catalysed reaction is Hydrolysis of terminal non-reducing N-acetyl-D-hexosamine residues in N-acetyl-beta-D-hexosaminides.. Beta-hexosaminidase that shows a broad substrate specificity. The polypeptide is Probable beta-hexosaminidase ARB_01353 (Arthroderma benhamiae (strain ATCC MYA-4681 / CBS 112371) (Trichophyton mentagrophytes)).